Reading from the N-terminus, the 977-residue chain is SLIT and NTRK-like protein 3 (977 aa).

The first 26 residues, 1–26 (MKPSIAEMLHRGRMLWIILLSTIALG), serve as a signal peptide directing secretion. Over 29-654 (TPIPLIEDSE…SPPGGPVPLS (626 aa)) the chain is Extracellular. N-linked (GlcNAc...) asparagine glycosylation occurs at Asn68. LRR repeat units follow at residues 78-99 (RPFKLYLQRNSMRKLYTNSFLH), 102-123 (NAVSINLGNNALQDIQTGAFNG), 126-147 (ILKRLYLHENKLDVFRNDTFLG), 150-171 (SLEYLQADYNVIKRIESGAFRN), 174-195 (KLRVLILNDNLIPMLPTNLFKA), and 197-218 (SLTHLDLRGNRLKVLFYRGMLD). Residues 232-283 (NPWNCTCEIVQLKSWLERIPYTALVGDITCETPFHFHGKDLREIRKTELCPL) form the LRRCT 1 domain. The segment at 325–360 (EYKSSNKQPKPTKQPRTPRPPSTSQALYPGPNQPPI) is disordered. The LRRNT domain maps to 364–406 (QTRPPIPIICPTGCTCNLHINDLGLTVNCKERGFNNISELLPR). LRR repeat units follow at residues 409–430 (NAKKLYLSSNLIQKIYRSDFWN), 433–454 (SLDLLHLGNNRISYVQDGAFIN), 457–478 (NLKSLFLNGNDIEKLTPGMFRG), 481–502 (SLHYLYFEFNVIREIQPAAFSL), 505–526 (NLKLLFLNNNLLRTLPTDAFAG), and 528–549 (SLARLNLRKNYFLYLPVAGVLE). Positions 562–613 (NPWDCTCDLVPFKQWIETISSVSVVGDVLCRSPENLTHRDVRTIELEVLCPE) constitute an LRRCT 2 domain. Residue Asn596 is glycosylated (N-linked (GlcNAc...) asparagine). The chain crosses the membrane as a helical span at residues 655-675 (VLILSLLVLFFSAVFVAAGLF). Residues 676 to 977 (AYVLRRRRKK…EVLEKTTYRF (302 aa)) lie on the Cytoplasmic side of the membrane. 2 disordered regions span residues 708–735 (LFEDGGGGGGGSGGGGRPTLSSPEKAPP) and 761–790 (EEEVAVSSAQEAGSAERGGPGTQPPGMGEA). Residues 711–724 (DGGGGGGGSGGGGR) are compositionally biased toward gly residues. A compositionally biased stretch (low complexity) spans 765-775 (AVSSAQEAGSA).

The protein belongs to the SLITRK family. Expressed in the occipital lobe of the cerebral cortex of the brain. Expressed at higher levels in some astrocytic brain tumors such as astrocytomas, oligodendrogliomas, glioblastomas, gangliogliomas and primitive neuroectodermal tumors.

It is found in the membrane. Suppresses neurite outgrowth. This Homo sapiens (Human) protein is SLIT and NTRK-like protein 3 (SLITRK3).